The sequence spans 351 residues: Peptide chain release factor 1 (351 aa).

Residue Q233 is modified to N5-methylglutamine.

It belongs to the prokaryotic/mitochondrial release factor family. Post-translationally, methylated by PrmC. Methylation increases the termination efficiency of RF1.

Its subcellular location is the cytoplasm. Functionally, peptide chain release factor 1 directs the termination of translation in response to the peptide chain termination codons UAG and UAA. This chain is Peptide chain release factor 1, found in Treponema pallidum subsp. pallidum (strain SS14).